The chain runs to 421 residues: UDP-N-acetylglucosamine 1-carboxyvinyltransferase (421 aa).

Residue 22 to 23 (KN) coordinates phosphoenolpyruvate. Arg93 is a UDP-N-acetyl-alpha-D-glucosamine binding site. Catalysis depends on Cys117, which acts as the Proton donor. At Cys117 the chain carries 2-(S-cysteinyl)pyruvic acid O-phosphothioketal. Residues 122–126 (RPVDL), Asp308, and Val330 contribute to the UDP-N-acetyl-alpha-D-glucosamine site.

It belongs to the EPSP synthase family. MurA subfamily.

It is found in the cytoplasm. It carries out the reaction phosphoenolpyruvate + UDP-N-acetyl-alpha-D-glucosamine = UDP-N-acetyl-3-O-(1-carboxyvinyl)-alpha-D-glucosamine + phosphate. The protein operates within cell wall biogenesis; peptidoglycan biosynthesis. In terms of biological role, cell wall formation. Adds enolpyruvyl to UDP-N-acetylglucosamine. The polypeptide is UDP-N-acetylglucosamine 1-carboxyvinyltransferase (Ectopseudomonas mendocina (strain ymp) (Pseudomonas mendocina)).